The primary structure comprises 283 residues: uncharacterized protein (283 aa).

An N-terminal signal peptide occupies residues 1-25 (MNKKRLLFRTPLDALFLLFGTALSA). Cys26 carries N-palmitoyl cysteine lipidation. A lipid anchor (S-diacylglycerol cysteine) is attached at Cys26.

Belongs to the MG439/MG440 family.

Its subcellular location is the cell membrane. This is an uncharacterized protein from Mycoplasma pneumoniae (strain ATCC 29342 / M129 / Subtype 1) (Mycoplasmoides pneumoniae).